Consider the following 167-residue polypeptide: Photosystem I assembly protein Ycf3 (167 aa).

3 TPR repeats span residues 35-68, 72-105, and 120-153; these read AFSY…ETDA, SYIL…NPSL, and GEQA…APTN.

It belongs to the Ycf3 family.

It localises to the plastid. Its subcellular location is the chloroplast thylakoid membrane. Essential for the assembly of the photosystem I (PSI) complex. May act as a chaperone-like factor to guide the assembly of the PSI subunits. The protein is Photosystem I assembly protein Ycf3 of Chlorella vulgaris (Green alga).